Reading from the N-terminus, the 248-residue chain is tRNA pseudouridine synthase A (248 aa).

Asp52 (nucleophile) is an active-site residue. Tyr111 lines the substrate pocket.

The protein belongs to the tRNA pseudouridine synthase TruA family. In terms of assembly, homodimer.

The enzyme catalyses uridine(38/39/40) in tRNA = pseudouridine(38/39/40) in tRNA. Functionally, formation of pseudouridine at positions 38, 39 and 40 in the anticodon stem and loop of transfer RNAs. The sequence is that of tRNA pseudouridine synthase A from Methylocella silvestris (strain DSM 15510 / CIP 108128 / LMG 27833 / NCIMB 13906 / BL2).